The primary structure comprises 219 residues: 2-phospho-L-lactate guanylyltransferase (219 aa).

It belongs to the CofC family. Homodimer.

The enzyme catalyses (2S)-2-phospholactate + GTP + H(+) = (2S)-lactyl-2-diphospho-5'-guanosine + diphosphate. Its pathway is cofactor biosynthesis; coenzyme F420 biosynthesis. In terms of biological role, guanylyltransferase that catalyzes the activation of (2S)-2-phospholactate (2-PL) as (2S)-lactyl-2-diphospho-5'-guanosine, via the condensation of 2-PL with GTP. It is involved in the biosynthesis of coenzyme F420, a hydride carrier cofactor. In Methanocaldococcus vulcanius (strain ATCC 700851 / DSM 12094 / M7) (Methanococcus vulcanius), this protein is 2-phospho-L-lactate guanylyltransferase.